A 374-amino-acid chain; its full sequence is Glutamate 5-kinase (374 aa).

Residue Lys-9 coordinates ATP. Positions 49, 136, and 148 each coordinate substrate. ATP-binding positions include 168–169 and 210–216; these read TD and TGGMKSK. The PUA domain maps to 276–354; that stretch reads SGVVRIDQGA…DEAKQLIPLV (79 aa).

The protein belongs to the glutamate 5-kinase family.

The protein localises to the cytoplasm. The catalysed reaction is L-glutamate + ATP = L-glutamyl 5-phosphate + ADP. It participates in amino-acid biosynthesis; L-proline biosynthesis; L-glutamate 5-semialdehyde from L-glutamate: step 1/2. Its function is as follows. Catalyzes the transfer of a phosphate group to glutamate to form L-glutamate 5-phosphate. The chain is Glutamate 5-kinase from Halalkalibacterium halodurans (strain ATCC BAA-125 / DSM 18197 / FERM 7344 / JCM 9153 / C-125) (Bacillus halodurans).